The chain runs to 273 residues: Tetraspanin-8 (273 aa).

Residues 1–7 (MARCSNN) are Cytoplasmic-facing. A helical membrane pass occupies residues 8–28 (LVGILNFLVFLLSIPILAGGI). Residues 29–45 (WLSQKGSTECERFLDKP) lie on the Extracellular side of the membrane. Residues 46 to 66 (VIALGVFLMVVAIAGLIGSCC) form a helical membrane-spanning segment. Residues 67–75 (RVTWLLWVY) lie on the Cytoplasmic side of the membrane. Residues 76-96 (LFVMFLLILLVFCITVFAFVV) traverse the membrane as a helical segment. Residues 97-235 (TNKGAGEAIE…NVKSAWKKVA (139 aa)) are Extracellular-facing. N-linked (GlcNAc...) asparagine glycosylation is present at Asn-192. The helical transmembrane segment at 236 to 256 (IVNIVFLVFLIIVYSVGCCAF) threads the bilayer. The Cytoplasmic segment spans residues 257 to 273 (RNNKRDDSYSRTYGYKP).

It belongs to the tetraspanin (TM4SF) family.

The protein localises to the membrane. Functionally, may be involved in the regulation of cell differentiation. The chain is Tetraspanin-8 (TET8) from Arabidopsis thaliana (Mouse-ear cress).